The following is a 2610-amino-acid chain: MADVDPDTLLEWLQMGQGDERDMQLIALEQLCMLLLMSDNVDRCFETCPPRTFLPALCKIFLDESAPDNVLEVTARAITYYLDVSAECTRRIVGVDGAIKALCNRLVVVELNNRTSRDLAEQCVKVLELICTRESGAVFEAGGLNCVLTFIRDSGHLVHKDTLHSAMAVVSRLCGKMEPQDSSLEICVESLSSLLKHEDHQVSDGALRCFASLADRFTRRGVDPAPLAKHGLTEELLSRMAAAGGTVSGPSSACKPGRSTTGAPSTTADSKLSNQVSTIVSLLSTLCRGSPVVTHDLLRSELPDSIESALQGDERCVLDTMRLVDLLLVLLFEGRKALPKSSAGSTGRIPGLRRLDSSGERSHRQLIDCIRSKDTDALIDAIDTGAFEVNFMDDVGQTLLNWASAFGTQEMVEFLCERGADVNRGQRSSSLHYAACFGRPQVAKTLLRHGANPDLRDEDGKTPLDKARERGHSEVVAILQSPGDWMCPVNKGDDKKKKDTNKDEEECNEPKGDPEMAPIYLKRLLPVFAQTFQQTMLPSIRKASLALIRKMIHFCSEALLKEVCDSDVGHNLPTILVEITATVLDQEDDDDGHLLALQIIRDLVDKGGDIFLDQLARLGVISKVSTLAGPSSDDENEEESKPEKEDEPQEDAKELQQGKPYHWRDWSIIRGRDCLYIWSDAAALELSNGSNGWFRFILDGKLATMYSSGSPEGGSDSSESRSEFLEKLQRARGQVKPSTSSQPILSAPGPTKLTVGNWSLTCLKEGEIAIHNSDGQQATILKEDLPGFVFESNRGTKHSFTAETSLGSEFVTGWTGKRGRKLKSKLEKTKQKVRTMARDLYDDHFKAVESMPRGVVVTLRNIATQLESSWELHTNRQCIESENTWRDLMKTALENLIVLLKDENTISPYEMCSSGLVQALLTVLNNSMDLDMKQDCSQLVERINVFKTAFSENEDDESRPAVALIRKLIAVLESIERLPLHLYDTPGSTYNLQILTRRLRFRLERAPGETALIDRTGRMLKMEPLATVESLEQYLLKMVAKQWYDFDRSSFVFVRKLREGQNFIFRHQHDFDENGIIYWIGTNAKTAYEWVNPAAYGLVVVTSSEGRNLPYGRLEDILSRDNSALNCHSNDDKNAWFAIDLGLWVIPSAYTLRHARGYGRSALRNWVFQVSKDGQNWTSLYTHVDDCSLNEPGSTATWPLDPPKDEKQGWRHVRIKQMGKNASGQTHYLSLSGFELYGTVNGVCEDQLGKAAKEAEANLRRQRRLVRSQVLKYMVPGARVIRGLDWKWRDQDGSPQGEGTVTGELHNGWIDVTWDAGGSNSYRMGAEGKFDLKLAPGYDPDTVASPKPVSSTVSGTTQSWSSLVKNNCPDKTSAAAGSSSRKGSSSSVCSVASSSDISLGSTKTERRSEIVMEHSIVSGADVHEPIVVLSSAENVPQTEVGSSSSASTSTLTAETGSENAERKLGPDSSVRTPGESSAISMGIVSVSSPDVSSVSELTNKEAASQRPLSSSASNRLSVSSLLAAGAPMSSSASVPNLSSRETSSLESFVRRVANIARTNATNNMNLSRSSSDNNTNTLGRNVMSTATSPLMGAQSFPNLTTPGTTSTVTMSTSSVTSSSNVATATTVLSVGQSLSNTLTTSLTSTSSESDTGQEAEYSLYDFLDSCRASTLLAELDDDEDLPEPDEEDDENEDDNQEDQEYEEVMILRRPSLQRRAGSRSDVTHHAVTSQLPQVPAGAGSRPIGEQEEEEYETKGGRRRTWDDDYVLKRQFSALVPAFDPRPGRTNVQQTTDLEIPPPGTPHSELLEEVECTPSPRLALTLKVTGLGTTREVELPLTNFRSTIFYYVQKLLQLSCNGNVKSDKLRRIWEPTYTIMYREMKDSDKEKENGKMGCWSIEHVEQYLGTDELPKNDLITYLQKNADAAFLRHWKLTGTNKSIRKNRNCSQLIAAYKDFCEHGTKSGLNQGAISTLQSSDILNLTKEQPQAKAGNGQNSCGVEDVLQLLRILYIVASDPYSRISQEDGDEQPQFTFPPDEFTSKKITTKILQQIEEPLALASGALPDWCEQLTSKCPFLIPFETRQLYFTCTAFGASRAIVWLQNRREATVERTRTTSSVRRDDPGEFRVGRLKHERVKVPRGESLMEWAENVMQIHADRKSVLEVEFLGEEGTGLGPTLEFYALVAAEFQRTDLGAWLCDDNFPDDESRHVDLGGGLKPPGYYVQRSCGLFTAPFPQDSDELERITKLFHFLGIFLAKCIQDNRLVDLPISKPFFKLMCMGDIKSNMSKLIYESRGDRDLHCTESQSEASTEEGHDSLSVGSFEEDSKSEFILDPPKPKPPAWFNGILTWEDFELVNPHRARFLKEIKDLAIKRRQILSNKGLSEDEKNTKLQELVLKNPSGSGPPLSIEDLGLNFQFCPSSRIYGFTAVDLKPSGEDEMITMDNAEEYVDLMFDFCMHTGIQKQMEAFRDGFNKVFPMEKLSSFSHEEVQMILCGNQSPSWAAEDIINYTEPKLGYTRDSPGFLRFVRVLCGMSSDERKAFLQFTTGCSTLPPGGLANLHPRLTVVRKVDATDASYPSVNTCVHYLKLPEYSSEEIMRERLLAATMEKGFHLN.

Residues 246–269 (TVSGPSSACKPGRSTTGAPSTTAD) form a disordered region. Polar residues predominate over residues 258-269 (RSTTGAPSTTAD). ANK repeat units follow at residues 395 to 424 (VGQT…DVNR), 426 to 455 (QRSS…NPDL), 459 to 491 (DGKT…PVNK), and 579 to 612 (ITAT…DIFL). A disordered region spans residues 489-513 (VNKGDDKKKKDTNKDEEECNEPKGD). Positions 491 to 501 (KGDDKKKKDTN) are enriched in basic and acidic residues. 2 disordered regions span residues 627-657 (LAGP…ELQQ) and 707-748 (SSGS…LSAP). Phosphoserine occurs at positions 631 and 640. Residues 639-657 (ESKPEKEDEPQEDAKELQQ) are compositionally biased toward basic and acidic residues. Residues 707 to 717 (SSGSPEGGSDS) show a composition bias toward low complexity. Residues 718 to 729 (SESRSEFLEKLQ) show a composition bias toward basic and acidic residues. Residues 1266–1338 (VRSQVLKYMV…KFDLKLAPGY (73 aa)) form the MIB/HERC2 domain. 2 disordered regions span residues 1343 to 1406 (VASP…KTER) and 1433 to 1483 (ENVP…SMGI). Residues 1348–1365 (PVSSTVSGTTQSWSSLVK) show a composition bias toward polar residues. Composition is skewed to low complexity over residues 1373–1395 (SAAA…ASSS) and 1441–1458 (GSSS…TGSE). Position 1384 is a phosphoserine (Ser1384). Positions 1469–1479 (SVRTPGESSAI) are enriched in polar residues. Ser1488 carries the post-translational modification Phosphoserine. The tract at residues 1496–1515 (ELTNKEAASQRPLSSSASNR) is disordered. At Ser1567 the chain carries Phosphoserine. Disordered regions lie at residues 1592–1611 (GAQS…VTMS) and 1674–1757 (ELDD…KGGR). The span at 1600–1611 (TTPGTTSTVTMS) shows a compositional bias: low complexity. Residues 1674-1703 (ELDDDEDLPEPDEEDDENEDDNQEDQEYEE) show a composition bias toward acidic residues. Phosphothreonine is present on Thr1760. Position 1772 is a phosphoserine (Ser1772). The disordered stretch occupies residues 1777-1797 (AFDPRPGRTNVQQTTDLEIPP). The tract at residues 2029-2103 (FTFPPDEFTS…AIVWLQNRRE (75 aa)) is K-box. Positions 2151 to 2610 (IHADRKSVLE…ATMEKGFHLN (460 aa)) constitute an HECT domain. Residues 2297–2318 (HCTESQSEASTEEGHDSLSVGS) form a disordered region. Ser2318 carries the phosphoserine modification. Cys2579 functions as the Glycyl thioester intermediate in the catalytic mechanism.

This sequence belongs to the UPL family. K-HECT subfamily. Interacts with IGSF1.

The enzyme catalyses S-ubiquitinyl-[E2 ubiquitin-conjugating enzyme]-L-cysteine + [acceptor protein]-L-lysine = [E2 ubiquitin-conjugating enzyme]-L-cysteine + N(6)-ubiquitinyl-[acceptor protein]-L-lysine.. The protein operates within protein modification; protein ubiquitination. Functionally, E3 ubiquitin-protein ligase which accepts ubiquitin from an E2 ubiquitin-conjugating enzyme in the form of a thioester and then directly transfers the ubiquitin to targeted substrates. Mediates 'Lys-63'-linked polyubiquitination of HSP90AA1 which leads to its intracellular localization and reduced secretion. Negatively regulating HSP90AA1 secretion in cranial mesenchyme cells may impair their emigration and may be essential for the correct development of the cranial neural folds and neural tube closure. Catalyzes ubiquitination and degradation of ZNF622, an assembly factor for the ribosomal 60S subunit, in hematopoietic cells, thereby promoting hematopoietic stem cell renewal. The polypeptide is E3 ubiquitin-protein ligase HECTD1 (Homo sapiens (Human)).